A 159-amino-acid polypeptide reads, in one-letter code: 2-C-methyl-D-erythritol 2,4-cyclodiphosphate synthase (159 aa).

A divalent metal cation contacts are provided by Asp8 and His10. 4-CDP-2-C-methyl-D-erythritol 2-phosphate is bound by residues 8–10 (DVH) and 34–35 (HS). An a divalent metal cation-binding site is contributed by His42. Residues 56-58 (DIG), 61-65 (FPDTD), 132-135 (TTTE), Phe139, and Arg142 each bind 4-CDP-2-C-methyl-D-erythritol 2-phosphate.

It belongs to the IspF family. Homotrimer. Requires a divalent metal cation as cofactor.

It carries out the reaction 4-CDP-2-C-methyl-D-erythritol 2-phosphate = 2-C-methyl-D-erythritol 2,4-cyclic diphosphate + CMP. It functions in the pathway isoprenoid biosynthesis; isopentenyl diphosphate biosynthesis via DXP pathway; isopentenyl diphosphate from 1-deoxy-D-xylulose 5-phosphate: step 4/6. Its function is as follows. Involved in the biosynthesis of isopentenyl diphosphate (IPP) and dimethylallyl diphosphate (DMAPP), two major building blocks of isoprenoid compounds. Catalyzes the conversion of 4-diphosphocytidyl-2-C-methyl-D-erythritol 2-phosphate (CDP-ME2P) to 2-C-methyl-D-erythritol 2,4-cyclodiphosphate (ME-CPP) with a corresponding release of cytidine 5-monophosphate (CMP). The protein is 2-C-methyl-D-erythritol 2,4-cyclodiphosphate synthase of Finegoldia magna (strain ATCC 29328 / DSM 20472 / WAL 2508) (Peptostreptococcus magnus).